A 561-amino-acid chain; its full sequence is Inner membrane ABC transporter ATP-binding protein YddA (561 aa).

Residues 1–3 (MIT) are Cytoplasmic-facing. A helical membrane pass occupies residues 4 to 24 (IPITLRMLIAKYLCLLKPFWL). The Periplasmic segment spans residues 25 to 31 (RKNNKTS). Residues 32–52 (VLLIIIILAMILGVVKIQVWL) form a helical membrane-spanning segment. The region spanning 35–337 (IIIILAMILG…FIYKYDELAE (303 aa)) is the ABC transmembrane type-1 domain. The Cytoplasmic segment spans residues 53–70 (NDWNNDFFNALSQKETDK). A helical membrane pass occupies residues 71 to 91 (LWQLVLWFPALLGIFVLISVN). The Periplasmic segment spans residues 92–151 (KTWLIKLLTIRWREWLTDYYLNRWFADKNYYFTQIYGEHKNTDNPDQRIAEDILLLISKT). The chain crosses the membrane as a helical span at residues 152 to 172 (LSLSFGFIQSLSMLITFTVIL). The Cytoplasmic portion of the chain corresponds to 173–187 (WESAGTLSFTVGGTE). A helical transmembrane segment spans residues 188–208 (WNIQGYMVYTVVLIVIGGTLF). At 209 to 290 (THKVGKRIRP…WQNIYSRSLS (82 aa)) the chain is on the periplasmic side. Residues 291 to 311 (VLPYFLLLPQFISGQINLGGL) traverse the membrane as a helical segment. The Cytoplasmic portion of the chain corresponds to 312-561 (MKSRQAFMLV…DDICDISAVL (250 aa)). Positions 367–561 (VQVADASIRT…DDICDISAVL (195 aa)) constitute an ABC transporter domain. 400–407 (GYSGAGKT) contacts ATP.

It belongs to the ABC transporter superfamily.

Its subcellular location is the cell inner membrane. The protein is Inner membrane ABC transporter ATP-binding protein YddA (yddA) of Escherichia coli (strain K12).